We begin with the raw amino-acid sequence, 179 residues long: MHALRSSVLALWLCLHVSVRAWMTYRSANGLDEYEPEDRIIFVGTKWCGNGNVAEGPEDLGSLKETDACCREHDMCPDLIEAGQSKHGLTNTASYTRLNCACDEKFYNCLKNSSETGSGAVRFTYFTLLGTMCYRNEHPLICVKKGWFSCSKYELDQSQPKRYQWFDVSSNFAFPRMLT.

The first 21 residues, 1-21, serve as a signal peptide directing secretion; it reads MHALRSSVLALWLCLHVSVRA. Positions 22–39 are excised as a propeptide; sequence WMTYRSANGLDEYEPEDR. The Ca(2+) site is built by Trp-47, Gly-49, and Gly-51. Cystine bridges form between Cys-48-Cys-70, Cys-69-Cys-109, Cys-76-Cys-102, Cys-100-Cys-133, and Cys-142-Cys-150. His-73 is a catalytic residue. Asp-74 is a binding site for Ca(2+). Residue Asp-103 is part of the active site. An N-linked (GlcNAc...) asparagine glycan is attached at Asn-112.

It depends on Ca(2+) as a cofactor. In terms of tissue distribution, expressed by the venom gland.

It localises to the secreted. It carries out the reaction a 1,2-diacyl-sn-glycero-3-phosphocholine + H2O = a 1-acyl-sn-glycero-3-phosphocholine + a fatty acid + H(+). In terms of biological role, PLA2 catalyzes the calcium-dependent hydrolysis of the 2-acyl groups in 3-sn-phosphoglycerides. The sequence is that of Phospholipase A2 from Xylocopa appendiculata circumvolans (Japanese carpenter bee).